Consider the following 232-residue polypeptide: Putative B3 domain-containing protein Os11g0242900 (232 aa).

Positions 1-51 (MTVELEKIAGSFFISKGWKTFVHRTGLLSGQYIRFQVLTPSKINVLLFDKK) form a DNA-binding region, TF-B3 1. A disordered region spans residues 92 to 121 (SHTSNKETSSDSRTESMTDIPSSSDNSGET). Basic and acidic residues predominate over residues 95–107 (SNKETSSDSRTES). Residues 108-121 (MTDIPSSSDNSGET) are compositionally biased toward polar residues. Residues 140-232 (DIKNYISIIG…PNVKITIDVL (93 aa)) constitute a DNA-binding region (TF-B3 2).

It is found in the nucleus. The sequence is that of Putative B3 domain-containing protein Os11g0242900 from Oryza sativa subsp. japonica (Rice).